A 209-amino-acid chain; its full sequence is MICOS complex subunit mic19 (209 aa).

Coiled-coil stretches lie at residues 48–86 (LELEIQNRVAKELERLRAREQQTLAEIEKRLSEAKDTGS) and 127–156 (EVAAVNKELNRESVNSEIEELRVKLEGRKK).

Belongs to the MICOS complex subunit Mic19 family. Component of the mitochondrial contact site and cristae organizing system (MICOS) complex.

It localises to the mitochondrion inner membrane. Its function is as follows. Component of the MICOS complex, a large protein complex of the mitochondrial inner membrane that plays crucial roles in the maintenance of crista junctions, inner membrane architecture, and formation of contact sites to the outer membrane. Involved in osmoadaptation. The polypeptide is MICOS complex subunit mic19 (Emericella nidulans (strain FGSC A4 / ATCC 38163 / CBS 112.46 / NRRL 194 / M139) (Aspergillus nidulans)).